A 361-amino-acid polypeptide reads, in one-letter code: Heme A synthase (361 aa).

The next 8 membrane-spanning stretches (helical) occupy residues 22 to 42, 109 to 129, 139 to 159, 175 to 195, 208 to 228, 269 to 289, 303 to 323, and 324 to 344; these read LWVRIWLYCVIVTLFAIVLVG, LLARGVGFVFALPLLFFWVTG, LLGILALGGLQGAVGWWMVAS, HLTIACLIFNATMAVARGLAP, FAFWLVVAVLVQIYLGGLVAG, FVHRLGAYVVLLLALWHAIAT, VLLFLLVCVQAAIGIATLLMV, and VPMDVALAHQAMALIVLGFAT. A heme-binding site is contributed by His-271. Residue His-332 coordinates heme.

The protein belongs to the COX15/CtaA family. Type 2 subfamily. In terms of assembly, interacts with CtaB. Heme b serves as cofactor.

It is found in the cell membrane. The catalysed reaction is Fe(II)-heme o + 2 A + H2O = Fe(II)-heme a + 2 AH2. It functions in the pathway porphyrin-containing compound metabolism; heme A biosynthesis; heme A from heme O: step 1/1. Its function is as follows. Catalyzes the conversion of heme O to heme A by two successive hydroxylations of the methyl group at C8. The first hydroxylation forms heme I, the second hydroxylation results in an unstable dihydroxymethyl group, which spontaneously dehydrates, resulting in the formyl group of heme A. The protein is Heme A synthase of Chelativorans sp. (strain BNC1).